A 475-amino-acid polypeptide reads, in one-letter code: Membrane-bound lytic murein transglycosylase F (475 aa).

Positions 1 to 30 are cleaved as a signal peptide; the sequence is MKKLKINYLFIGILTLLLAAALWPSIPWFG. The interval 31–269 is non-LT domain; it reads KTENHIAAIQ…RIEEKYLGHG (239 aa). Positions 270–475 are LT domain; sequence DDFDYVDTRS…MKLAQDYPAV (206 aa). Glutamate 314 is a catalytic residue.

The protein in the N-terminal section; belongs to the bacterial solute-binding protein 3 family. It in the C-terminal section; belongs to the transglycosylase Slt family.

The protein localises to the cell outer membrane. The enzyme catalyses Exolytic cleavage of the (1-&gt;4)-beta-glycosidic linkage between N-acetylmuramic acid (MurNAc) and N-acetylglucosamine (GlcNAc) residues in peptidoglycan, from either the reducing or the non-reducing ends of the peptidoglycan chains, with concomitant formation of a 1,6-anhydrobond in the MurNAc residue.. Murein-degrading enzyme that degrades murein glycan strands and insoluble, high-molecular weight murein sacculi, with the concomitant formation of a 1,6-anhydromuramoyl product. Lytic transglycosylases (LTs) play an integral role in the metabolism of the peptidoglycan (PG) sacculus. Their lytic action creates space within the PG sacculus to allow for its expansion as well as for the insertion of various structures such as secretion systems and flagella. This Salmonella typhi protein is Membrane-bound lytic murein transglycosylase F.